Here is a 414-residue protein sequence, read N- to C-terminus: MYHRNILIEQTDPEIFAAIQAENARQEHHIELIASENYASPAVMAAQGSQLTNKYAEGYPGRRYYGGCEHVDVAEQLAIDRVKQIFGADAANVQPHCGASANEAVFLAFLKPGDTIMGMSLAEGGHLTHGMALNMSGKWFNVVSYGLNDKEEIDYEAMERKAHETKPKLIIAGASAYSLAIDFERFARVAKDVGAIFMVDMAHYAGLIAAGIYPNPVPHADIVTSTTHKSLRGPRGGIILMKAQHEKIINSAIFPGLQGGPLMHVIAAKAIAFKEALSPEFKIYQQQVLKNAQIVAETLTQRGLRIVSGRTESHVMLVDLRAKGITGKEAEAVLGSAHMTINKNAIPNDPEKPMVTSGVRIGTPAMTTRGFGDEEARMTANLVADVLDNPRDAANIEAVRAKVHALTSRFPVYG.

(6S)-5,6,7,8-tetrahydrofolate-binding positions include Leu-121 and 125 to 127; that span reads GHL. Lys-229 is modified (N6-(pyridoxal phosphate)lysine).

The protein belongs to the SHMT family. In terms of assembly, homodimer. Pyridoxal 5'-phosphate serves as cofactor.

The protein resides in the cytoplasm. The catalysed reaction is (6R)-5,10-methylene-5,6,7,8-tetrahydrofolate + glycine + H2O = (6S)-5,6,7,8-tetrahydrofolate + L-serine. Its pathway is one-carbon metabolism; tetrahydrofolate interconversion. The protein operates within amino-acid biosynthesis; glycine biosynthesis; glycine from L-serine: step 1/1. In terms of biological role, catalyzes the reversible interconversion of serine and glycine with tetrahydrofolate (THF) serving as the one-carbon carrier. This reaction serves as the major source of one-carbon groups required for the biosynthesis of purines, thymidylate, methionine, and other important biomolecules. Also exhibits THF-independent aldolase activity toward beta-hydroxyamino acids, producing glycine and aldehydes, via a retro-aldol mechanism. The protein is Serine hydroxymethyltransferase of Polaromonas naphthalenivorans (strain CJ2).